We begin with the raw amino-acid sequence, 624 residues long: Chitin elicitor receptor kinase 1 (624 aa).

The first 18 residues, 1–18 (MEASTSLLVLVLAAAAFA), serve as a signal peptide directing secretion. At 19-240 (AGTVTEAAGD…SPGKGASAGA (222 aa)) the chain is on the extracellular side. Cystine bridges form between cysteine 30-cysteine 93, cysteine 34-cysteine 160, and cysteine 91-cysteine 158. The N-linked (GlcNAc...) asparagine glycan is linked to asparagine 48. 115-121 (RGQIYTS) provides a ligand contact to chitin. Asparagine 128 is a glycosylation site (N-linked (GlcNAc...) asparagine). 142–148 (PANNIPD) is a binding site for chitin. 2 N-linked (GlcNAc...) asparagine glycosylation sites follow: asparagine 153 and asparagine 157. The 46-residue stretch at 173 to 218 (LTYPLRAEDTLASVAATYGLSSQLDVVRRYNPGMESATGSGIVYIP) folds into the LysM domain. A glycan (N-linked (GlcNAc...) asparagine) is linked at asparagine 223. The helical transmembrane segment at 241-261 (IAGGVVAGVVVLAAIFLYIIF) threads the bilayer. Residues 262–624 (YRRRKAKQAT…QGLVNLMSGR (363 aa)) are Cytoplasmic-facing. The 276-residue stretch at 324–599 (FSIGNKIGQG…RSVVVALMTL (276 aa)) folds into the Protein kinase domain. Residues 330–338 (IGQGGFGAV) and lysine 351 each bind ATP. The active-site Proton acceptor is aspartate 443.

Belongs to the protein kinase superfamily. Ser/Thr protein kinase family. In terms of assembly, homooligomer. Interacts with CEBIP. Interacts with LYP4 and LYP6. Interacts with RLCK176. Autophosphorylated; induced by chitin and derivatives. In terms of tissue distribution, expressed in seedlings, roots, shoots and stems, and, to a lower extent, in flowers.

The protein localises to the cell membrane. The enzyme catalyses L-seryl-[protein] + ATP = O-phospho-L-seryl-[protein] + ADP + H(+). The catalysed reaction is L-threonyl-[protein] + ATP = O-phospho-L-threonyl-[protein] + ADP + H(+). Lysin motif (LysM) receptor kinase required as a cell surface receptor for chitin elicitor (chitooligosaccharides) signaling leading to innate immunity in response to biotic stresses. Involved in the resistance to pathogenic fungi, probably by sensing microbe-associated molecular patterns (MAMP) and pathogen-associated molecular patterns (PAMP). Involved in the detection of microbial peptidoglycans (PGNs) and mediates PGN response. Plays dual roles in PGN and chitin signaling during innate immunity. Acts as an adapter for LYP4 and LYP6 and mediates signal transduction from the extracellular to intracellular spaces. Participates in the activation of defense genes during response to PGN and chitin. Phosphorylates the downstream partner RLCK185 in response to chitin elicitation. The sequence is that of Chitin elicitor receptor kinase 1 from Oryza sativa subsp. japonica (Rice).